We begin with the raw amino-acid sequence, 372 residues long: tRNA-specific 2-thiouridylase MnmA (372 aa).

ATP is bound by residues 16–23 (GMSGGVDS) and Met-42. The interval 102 to 104 (NPD) is interaction with target base in tRNA. Residue Cys-107 is the Nucleophile of the active site. The cysteines at positions 107 and 205 are disulfide-linked. Gly-132 lines the ATP pocket. Residues 155-157 (KDQ) are interaction with tRNA. Cys-205 acts as the Cysteine persulfide intermediate in catalysis. Residues 317–318 (RY) are interaction with tRNA.

It belongs to the MnmA/TRMU family.

It is found in the cytoplasm. The catalysed reaction is S-sulfanyl-L-cysteinyl-[protein] + uridine(34) in tRNA + AH2 + ATP = 2-thiouridine(34) in tRNA + L-cysteinyl-[protein] + A + AMP + diphosphate + H(+). In terms of biological role, catalyzes the 2-thiolation of uridine at the wobble position (U34) of tRNA, leading to the formation of s(2)U34. This chain is tRNA-specific 2-thiouridylase MnmA, found in Shewanella sp. (strain MR-4).